We begin with the raw amino-acid sequence, 532 residues long: Intercellular adhesion molecule 1 (532 aa).

An N-terminal signal peptide occupies residues methionine 1–alanine 27. Topologically, residues glutamine 28 to glutamate 480 are extracellular. Ig-like C2-type domains follow at residues glycine 41–alanine 103 and glycine 128–arginine 193. 3 disulfides stabilise this stretch: cysteine 48–cysteine 92, cysteine 52–cysteine 96, and cysteine 135–cysteine 186. Asparagine 145 carries N-linked (GlcNAc...) asparagine glycosylation. The Cell attachment site; atypical motif lies at arginine 152–glutamate 154. 4 N-linked (GlcNAc...) asparagine glycosylation sites follow: asparagine 183, asparagine 202, asparagine 267, and asparagine 296. Ig-like C2-type domains lie at aspartate 230–glutamine 297 and glycine 325–alanine 378. A disulfide bridge links cysteine 237 with cysteine 290. An intrachain disulfide couples cysteine 332 to cysteine 371. 2 N-linked (GlcNAc...) asparagine glycosylation sites follow: asparagine 385 and asparagine 406. 3 disulfides stabilise this stretch: cysteine 403/cysteine 419, cysteine 419/cysteine 457, and cysteine 431/cysteine 457. An Ig-like C2-type 5 domain is found at asparagine 412–glycine 464. The chain crosses the membrane as a helical span at residues isoleucine 481–tyrosine 503. The Cytoplasmic portion of the chain corresponds to asparagine 504–proline 532. Phosphothreonine occurs at positions 521 and 530.

This sequence belongs to the immunoglobulin superfamily. ICAM family. Homodimer. Interacts with MUC1 and promotes cell aggregation in epithelial cells. Interacts with ARHGEF26/SGEF. Interacts (on T cell side) with CD81, CD247 and CD9 at immunological synapses between antigen-presenting cells and T cells. Post-translationally, monoubiquitinated, which is promoted by MARCH9 and leads to endocytosis.

It is found in the membrane. Functionally, ICAM proteins are ligands for the leukocyte adhesion protein LFA-1 (integrin alpha-L/beta-2). During leukocyte trans-endothelial migration, ICAM1 engagement promotes the assembly of endothelial apical cups through ARHGEF26/SGEF and RHOG activation. This is Intercellular adhesion molecule 1 (ICAM1) from Pan paniscus (Pygmy chimpanzee).